A 238-amino-acid chain; its full sequence is Large ribosomal subunit protein uL1 (238 aa).

The disordered stretch occupies residues 217 to 238 (TNGPGVPVDETIQKNYADDAEA).

It belongs to the universal ribosomal protein uL1 family. Part of the 50S ribosomal subunit.

In terms of biological role, binds directly to 23S rRNA. The L1 stalk is quite mobile in the ribosome, and is involved in E site tRNA release. Its function is as follows. Protein L1 is also a translational repressor protein, it controls the translation of the L11 operon by binding to its mRNA. This is Large ribosomal subunit protein uL1 from Corynebacterium urealyticum (strain ATCC 43042 / DSM 7109).